A 1997-amino-acid chain; its full sequence is Receptor-type tyrosine-protein phosphatase beta (1997 aa).

Residues 1 to 22 (MLSHGAGLALWITLSLLQTGLA) form the signal peptide. Fibronectin type-III domains lie at 23-111 (EPER…TDPL), 112-207 (PPAR…SPVK), 203-288 (PSPV…VRTA), 291-378 (EVSN…TFPD), 379-471 (KVAN…LAVL), 467-552 (PLAV…KGRT), 556-641 (QVTD…EGRT), 642-729 (VPSS…QERT), 730-829 (VPDK…TLRN), 819-906 (PEPV…GFTV), 909-1001 (AVKN…VQGV), 995-1083 (PASV…EGRT), 1087-1175 (AVTD…VPAS), 1173-1260 (PASV…SRTA), 1260-1356 (APSP…TKPD), 1357-1448 (KIQN…IDRP), and 1458-1554 (NEKD…EMES). The Extracellular portion of the chain corresponds to 23-1621 (EPERCNFTLA…ESEPLFGAIE (1599 aa)). 16 N-linked (GlcNAc...) asparagine glycosylation sites follow: Asn28, Asn53, Asn75, Asn172, Asn198, Asn267, Asn321, Asn414, Asn421, Asn479, Asn544, Asn574, Asn598, Asn652, Asn721, and Asn829. Asn1040, Asn1096, Asn1163, Asn1185, Asn1212, Asn1274, Asn1367, Asn1470, Asn1474, and Asn1518 each carry an N-linked (GlcNAc...) asparagine glycan. Residues 1622–1642 (GVSAGLFLIGMLVAVVALLIC) form a helical membrane-spanning segment. At 1643-1997 (RQKVSHGRER…YHRDPVYSRH (355 aa)) the chain is on the cytoplasmic side. Residues 1703–1963 (LSKEYEELKD…VYLHQCVRDV (261 aa)) enclose the Tyrosine-protein phosphatase domain. Residues Asp1870, 1904 to 1910 (CSAGVGR), and Gln1948 each bind substrate. The Phosphocysteine intermediate role is filled by Cys1904. Tyr1981 carries the phosphotyrosine modification.

This sequence belongs to the protein-tyrosine phosphatase family. Receptor class 3 subfamily. In terms of assembly, monomer. Interacts with TEK. Interacts via fibronectin type-III 17 domain with CDH5. Detected in a complex with CNTN1 and NRCAM. Interacts (phosphorylated form) with FYN and GRB2. Interacts with IGFBP2.

It localises to the membrane. It carries out the reaction O-phospho-L-tyrosyl-[protein] + H2O = L-tyrosyl-[protein] + phosphate. Plays an important role in blood vessel remodeling and angiogenesis. Not necessary for the initial formation of blood vessels, but is essential for their maintenance and remodeling. Can induce dephosphorylation of TEK/TIE2, CDH5/VE-cadherin and KDR/VEGFR-2. Regulates angiopoietin-TIE2 signaling in endothelial cells. Acts as a negative regulator of TIE2, and controls TIE2 driven endothelial cell proliferation, which in turn affects blood vessel remodeling during embryonic development and determines blood vessel size during perinatal growth. Essential for the maintenance of endothelial cell contact integrity and for the adhesive function of VE-cadherin in endothelial cells and this requires the presence of plakoglobin. The polypeptide is Receptor-type tyrosine-protein phosphatase beta (PTPRB) (Homo sapiens (Human)).